We begin with the raw amino-acid sequence, 458 residues long: Phosphoglucosamine mutase (458 aa).

Residue Ser-106 is the Phosphoserine intermediate of the active site. The Mg(2+) site is built by Ser-106, Asp-247, Asp-249, and Asp-251. Phosphoserine is present on Ser-106.

Belongs to the phosphohexose mutase family. The cofactor is Mg(2+). Post-translationally, activated by phosphorylation.

It carries out the reaction alpha-D-glucosamine 1-phosphate = D-glucosamine 6-phosphate. In terms of biological role, catalyzes the conversion of glucosamine-6-phosphate to glucosamine-1-phosphate. This Chlamydia trachomatis serovar L2 (strain ATCC VR-902B / DSM 19102 / 434/Bu) protein is Phosphoglucosamine mutase.